The chain runs to 32 residues: Photosystem II reaction center protein T (32 aa).

A helical membrane pass occupies residues 3–23 (ALVYTFLLVATLGIIFFAIFF).

This sequence belongs to the PsbT family. PSII is composed of 1 copy each of membrane proteins PsbA, PsbB, PsbC, PsbD, PsbE, PsbF, PsbH, PsbI, PsbJ, PsbK, PsbL, PsbM, PsbT, PsbY, PsbZ, Psb30/Ycf12, at least 3 peripheral proteins of the oxygen-evolving complex and a large number of cofactors. It forms dimeric complexes.

It localises to the plastid. It is found in the chloroplast thylakoid membrane. In terms of biological role, found at the monomer-monomer interface of the photosystem II (PS II) dimer, plays a role in assembly and dimerization of PSII. PSII is a light-driven water plastoquinone oxidoreductase, using light energy to abstract electrons from H(2)O, generating a proton gradient subsequently used for ATP formation. The chain is Photosystem II reaction center protein T from Psilotum nudum (Whisk fern).